Reading from the N-terminus, the 97-residue chain is Co-chaperonin GroES (97 aa).

This sequence belongs to the GroES chaperonin family. Heptamer of 7 subunits arranged in a ring. Interacts with the chaperonin GroEL.

The protein localises to the cytoplasm. Together with the chaperonin GroEL, plays an essential role in assisting protein folding. The GroEL-GroES system forms a nano-cage that allows encapsulation of the non-native substrate proteins and provides a physical environment optimized to promote and accelerate protein folding. GroES binds to the apical surface of the GroEL ring, thereby capping the opening of the GroEL channel. In Aeromonas salmonicida, this protein is Co-chaperonin GroES.